The sequence spans 466 residues: Chromosomal replication initiator protein DnaA (466 aa).

The domain I, interacts with DnaA modulators stretch occupies residues 1-86; the sequence is MSLSLWQQCL…EVGTKPVTQT (86 aa). The tract at residues 86 to 129 is domain II; sequence TLKTPVHNVVAPTQTTTAQPQRVAPAARSGWDNVPAPAEPTYRS. A domain III, AAA+ region region spans residues 130–346; that stretch reads NVNVKHTFDN…GALNRVIANA (217 aa). The ATP site is built by glycine 174, glycine 176, lysine 177, and threonine 178. Positions 347-466 are domain IV, binds dsDNA; sequence NFTGRAITID…FSNLIRTLSS (120 aa).

The protein belongs to the DnaA family. Oligomerizes as a right-handed, spiral filament on DNA at oriC.

It is found in the cytoplasm. Its function is as follows. Plays an essential role in the initiation and regulation of chromosomal replication. ATP-DnaA binds to the origin of replication (oriC) to initiate formation of the DNA replication initiation complex once per cell cycle. Binds the DnaA box (a 9 base pair repeat at the origin) and separates the double-stranded (ds)DNA. Forms a right-handed helical filament on oriC DNA; dsDNA binds to the exterior of the filament while single-stranded (ss)DNA is stabiized in the filament's interior. The ATP-DnaA-oriC complex binds and stabilizes one strand of the AT-rich DNA unwinding element (DUE), permitting loading of DNA polymerase. After initiation quickly degrades to an ADP-DnaA complex that is not apt for DNA replication. Binds acidic phospholipids. In Salmonella enteritidis PT4 (strain P125109), this protein is Chromosomal replication initiator protein DnaA.